Here is a 349-residue protein sequence, read N- to C-terminus: Single-stranded TG1-3 DNA-binding protein (349 aa).

The region spanning 45–127 is the RRM 1 domain; that stretch reads FRVFVGRLST…REIVVQKARP (83 aa). Disordered stretches follow at residues 121–208 and 298–349; these read VVQK…PNSI and EDKQ…AITA. The residue at position 152 (Ser-152) is a Phosphoserine. Over residues 168–179 the composition is skewed to polar residues; that stretch reads ANTATAPSSNEA. Over residues 181–191 the composition is skewed to basic and acidic residues; the sequence is GVDKKQNEIKG. The RRM 2 domain occupies 206-296; that stretch reads NSIYVSGLSV…LTLVVKSAVF (91 aa). Composition is skewed to basic and acidic residues over residues 298 to 310 and 327 to 340; these read EDKQ…KNEN and TEPK…EEKS.

It is found in the cytoplasm. It localises to the nucleus. The protein localises to the chromosome. Its subcellular location is the telomere. Binds single-stranded telomeric sequences of the type (TG[1-3])n in vitro. Has a role in meiosis. The sequence is that of Single-stranded TG1-3 DNA-binding protein (tcg1) from Schizosaccharomyces pombe (strain 972 / ATCC 24843) (Fission yeast).